The primary structure comprises 1663 residues: Cortactin-binding protein 2 (1663 aa).

5 disordered regions span residues 1–23 (MATD…AGAA), 203–222 (KKKT…RSTE), 367–440 (GASV…LHPG), 454–478 (GNAN…SPTS), and 498–616 (RFTS…PKPS). Positions 119 to 276 (KKMQERMSAQ…EQLKRGSDSK (158 aa)) form a coiled coil. Residues 386–396 (PSTGSTPDPTS) are compositionally biased toward low complexity. Residue R498 is modified to Asymmetric dimethylarginine. Polar residues predominate over residues 583–593 (TVASTPSSLPQ). ANK repeat units follow at residues 709 to 739 (GRPT…DINY), 743 to 772 (DGHS…QVNA), 776 to 805 (NGFT…NINH), 809 to 838 (GGQT…NRSV), 842 to 871 (DGWT…PAHG), and 912 to 942 (EGWT…EPER). Positions 1449 to 1482 (KGESGAWRKVNTSPRRKSGRFSLPTWNKPDLSTE) are disordered. S1524 carries the phosphoserine modification. Positions 1581-1663 (QKEVSPLSSH…KNEHLEKPNK (83 aa)) are disordered. Residues 1582–1599 (KEVSPLSSHQTTECSNSK) show a composition bias toward polar residues. Residues 1624-1638 (SQNTKRSSSSSNTRQ) are compositionally biased toward low complexity. Positions 1639-1648 (IEINNNSKEV) are enriched in polar residues. The segment covering 1653-1663 (HKNEHLEKPNK) has biased composition (basic and acidic residues).

In terms of assembly, interacts with CTTN/cortactin SH3 domain. Interacts with STRN, STRN4/zinedin and MOB4/phocein; this interactions mediate the association with the STRIPAK core complex and may regulate dendritic spine distribution of the STRIPAK complex in hippocampal neurons. Activation of glutamate receptors weakens the interaction with STRN and STRN4. In terms of tissue distribution, highest expression in brain. Also expressed in kidney, pancreas, lung, heart, liver, skeletal muscle and placenta.

It is found in the cytoplasm. It localises to the cell cortex. Its subcellular location is the cell projection. The protein resides in the dendritic spine. Regulates the dendritic spine distribution of CTTN/cortactin in hippocampal neurons, and thus controls dendritic spinogenesis and dendritic spine maintenance. Associates with the striatin-interacting phosphatase and kinase (STRIPAK) core complex to regulate dendritic spine distribution of the STRIPAK complex in hippocampal neurons. The sequence is that of Cortactin-binding protein 2 from Homo sapiens (Human).